The primary structure comprises 324 residues: Formimidoylglutamase (324 aa).

His-124, Asp-153, His-155, Asp-157, Asp-245, and Asp-247 together coordinate Mn(2+).

It belongs to the arginase family. Requires Mn(2+) as cofactor.

It carries out the reaction N-formimidoyl-L-glutamate + H2O = formamide + L-glutamate. It functions in the pathway amino-acid degradation; L-histidine degradation into L-glutamate; L-glutamate from N-formimidoyl-L-glutamate (hydrolase route): step 1/1. Its function is as follows. Catalyzes the conversion of N-formimidoyl-L-glutamate to L-glutamate and formamide. This is Formimidoylglutamase from Hahella chejuensis (strain KCTC 2396).